Consider the following 168-residue polypeptide: Plastocyanin A, chloroplastic (168 aa).

The transit peptide at 1–69 (MATVTSAAVS…SAMIASNAMA (69 aa)) directs the protein to the chloroplast. One can recognise a Plastocyanin-like domain in the interval 70–168 (IDVLLGADDG…AGMVGKVTVN (99 aa)). Cu cation contacts are provided by His-106, Cys-153, His-156, and Met-161.

It belongs to the plastocyanin family. It depends on Cu(2+) as a cofactor.

It is found in the plastid. It localises to the chloroplast thylakoid membrane. Participates in electron transfer between P700 and the cytochrome b6-f complex in photosystem I. This is Plastocyanin A, chloroplastic (PETE) from Populus nigra (Lombardy poplar).